Here is a 117-residue protein sequence, read N- to C-terminus: Large ribosomal subunit protein bL19 (117 aa).

The protein belongs to the bacterial ribosomal protein bL19 family.

In terms of biological role, this protein is located at the 30S-50S ribosomal subunit interface and may play a role in the structure and function of the aminoacyl-tRNA binding site. This Vesicomyosocius okutanii subsp. Calyptogena okutanii (strain HA) protein is Large ribosomal subunit protein bL19.